Here is a 60-residue protein sequence, read N- to C-terminus: Large ribosomal subunit protein uL30 (60 aa).

It belongs to the universal ribosomal protein uL30 family. Part of the 50S ribosomal subunit.

The chain is Large ribosomal subunit protein uL30 from Shewanella denitrificans (strain OS217 / ATCC BAA-1090 / DSM 15013).